A 421-amino-acid polypeptide reads, in one-letter code: Thymidine phosphorylase (421 aa).

This sequence belongs to the thymidine/pyrimidine-nucleoside phosphorylase family. In terms of assembly, homodimer.

It catalyses the reaction thymidine + phosphate = 2-deoxy-alpha-D-ribose 1-phosphate + thymine. In terms of biological role, the enzymes which catalyze the reversible phosphorolysis of pyrimidine nucleosides are involved in the degradation of these compounds and in their utilization as carbon and energy sources, or in the rescue of pyrimidine bases for nucleotide synthesis. The protein is Thymidine phosphorylase (deoA) of Mycoplasma genitalium (strain ATCC 33530 / DSM 19775 / NCTC 10195 / G37) (Mycoplasmoides genitalium).